The chain runs to 350 residues: Glyceraldehyde-3-phosphate dehydrogenase (350 aa).

NAD(+) is bound by residues 10-11, D36, R82, and S125; that span reads RI. D-glyceraldehyde 3-phosphate contacts are provided by residues 161–163, T193, 222–223, and R245; these read SCT and TG. Catalysis depends on C162, which acts as the Nucleophile. N331 provides a ligand contact to NAD(+).

The protein belongs to the glyceraldehyde-3-phosphate dehydrogenase family. Homotetramer.

The protein localises to the cytoplasm. It carries out the reaction D-glyceraldehyde 3-phosphate + phosphate + NAD(+) = (2R)-3-phospho-glyceroyl phosphate + NADH + H(+). It participates in carbohydrate degradation; glycolysis; pyruvate from D-glyceraldehyde 3-phosphate: step 1/5. Functionally, catalyzes the oxidative phosphorylation of glyceraldehyde 3-phosphate (G3P) to 1,3-bisphosphoglycerate (BPG) using the cofactor NAD. The first reaction step involves the formation of a hemiacetal intermediate between G3P and a cysteine residue, and this hemiacetal intermediate is then oxidized to a thioester, with concomitant reduction of NAD to NADH. The reduced NADH is then exchanged with the second NAD, and the thioester is attacked by a nucleophilic inorganic phosphate to produce BPG. The protein is Glyceraldehyde-3-phosphate dehydrogenase (gap) of Treponema pallidum (strain Nichols).